A 347-amino-acid polypeptide reads, in one-letter code: Olfactory receptor 1L6 (347 aa).

Residues 1–62 are Extracellular-facing; it reads MSYFYRLKLM…GLSSNPQLQK (62 aa). Asn-41 carries N-linked (GlcNAc...) asparagine glycosylation. A helical membrane pass occupies residues 63-86; the sequence is PLFAIFLIMYLLAAVGNVLIIPAI. At 87–94 the chain is on the cytoplasmic side; that stretch reads YSDPRLHT. A helical membrane pass occupies residues 95-116; it reads PMYFFLSNLSFMDICFTTVIVP. The Extracellular segment spans residues 117 to 137; the sequence is KMLVNFLSETKVISYVGCLAQ. Cysteines 134 and 226 form a disulfide. The chain crosses the membrane as a helical span at residues 138 to 157; the sequence is MYFFMAFGNTDSYLLASMAI. The Cytoplasmic segment spans residues 158-176; the sequence is DRLVAICNPLHYDVVMKPR. A helical transmembrane segment spans residues 177–195; sequence HCLLMLLGSCSISHLHSLF. Over 196–233 the chain is Extracellular; sequence RVLLMSRLSFCASHIIKHFFCDTQPVLKLSCSDTSSSQ. Residues 234-256 form a helical membrane-spanning segment; it reads MVVMTETLAVIVTPFLCIIFSYL. The Cytoplasmic segment spans residues 257-273; it reads RIMVTVLRIPSAAGKWK. The helical transmembrane segment at 274–296 threads the bilayer; the sequence is AFSTCGSHLTAVALFYGSIIYVY. The Extracellular portion of the chain corresponds to 297–309; it reads FRPLSMYSVVRDR. A helical membrane pass occupies residues 310–329; sequence VATVMYTVVTPMLNPFIYSL. At 330–347 the chain is on the cytoplasmic side; sequence RNKDMKRGLKKLQDRIYR.

Belongs to the G-protein coupled receptor 1 family.

It is found in the cell membrane. In terms of biological role, odorant receptor. This chain is Olfactory receptor 1L6 (OR1L6), found in Homo sapiens (Human).